Reading from the N-terminus, the 278-residue chain is Small ribosomal subunit protein uS2 (278 aa).

Disordered stretches follow at residues 216 to 235 (EAAAAAKEAEDDTGYTTQWD) and 250 to 278 (NFAAAPADGNWGATTGGDWAAAGGEEWTN). Low complexity predominate over residues 256–278 (ADGNWGATTGGDWAAAGGEEWTN).

Belongs to the universal ribosomal protein uS2 family. As to quaternary structure, component of the small ribosomal subunit. Mature ribosomes consist of a small (40S) and a large (60S) subunit. The 40S subunit contains about 33 different proteins and 1 molecule of RNA (18S). The 60S subunit contains about 49 different proteins and 3 molecules of RNA (25S, 5.8S and 5S). Interacts with ribosomal protein S21.

The protein resides in the cytoplasm. In terms of biological role, required for the assembly and/or stability of the 40S ribosomal subunit. Required for the processing of the 20S rRNA-precursor to mature 18S rRNA in a late step of the maturation of 40S ribosomal subunits. This Monosiga brevicollis (Choanoflagellate) protein is Small ribosomal subunit protein uS2.